A 697-amino-acid polypeptide reads, in one-letter code: Protein arginine N-methyltransferase 7 (697 aa).

SAM-dependent MTase PRMT-type domains lie at 14–357 and 366–697; these read QNTW…YSLW and EQPA…EETK.

This sequence belongs to the class I-like SAM-binding methyltransferase superfamily. Protein arginine N-methyltransferase family. PRMT7 subfamily.

Its function is as follows. Essential arginine methyltransferase that can both catalyze the formation of omega-N monomethylarginine (MMA) and symmetrical dimethylarginine (sDMA). Specifically mediates the symmetrical dimethylation of arginine residues in the small nuclear ribonucleoproteins SmD1 and SmD3. This chain is Protein arginine N-methyltransferase 7 (Art7), found in Drosophila virilis (Fruit fly).